The primary structure comprises 87 residues: UPF0367 protein P9211_01391 (87 aa).

The protein belongs to the UPF0367 family.

The polypeptide is UPF0367 protein P9211_01391 (Prochlorococcus marinus (strain MIT 9211)).